The following is a 289-amino-acid chain: Ribosomal RNA small subunit methyltransferase A (289 aa).

The S-adenosyl-L-methionine site is built by asparagine 28, leucine 30, glycine 55, glutamate 76, aspartate 101, and asparagine 125.

This sequence belongs to the class I-like SAM-binding methyltransferase superfamily. rRNA adenine N(6)-methyltransferase family. RsmA subfamily.

It localises to the cytoplasm. The catalysed reaction is adenosine(1518)/adenosine(1519) in 16S rRNA + 4 S-adenosyl-L-methionine = N(6)-dimethyladenosine(1518)/N(6)-dimethyladenosine(1519) in 16S rRNA + 4 S-adenosyl-L-homocysteine + 4 H(+). Specifically dimethylates two adjacent adenosines (A1518 and A1519) in the loop of a conserved hairpin near the 3'-end of 16S rRNA in the 30S particle. May play a critical role in biogenesis of 30S subunits. The sequence is that of Ribosomal RNA small subunit methyltransferase A from Clostridioides difficile (strain 630) (Peptoclostridium difficile).